Here is a 266-residue protein sequence, read N- to C-terminus: Killer cell lectin-like receptor 8 (266 aa).

Residues 1–44 (MSEQEVTFPTMRFHKSSGLNSQVRLEGTQRSRKAGLRVCSVPWQ) are Cytoplasmic-facing. A helical; Signal-anchor for type II membrane protein transmembrane segment spans residues 45–66 (LIVIALGILCSLRLVIVAVFVT). Over 67–266 (KFFQYSQHKQ…CGKKLDKFPD (200 aa)) the chain is Extracellular. N-linked (GlcNAc...) asparagine glycosylation is found at N87 and N104. One can recognise a C-type lectin domain in the interval 143-261 (GVKYWFCYGT…PYYCICGKKL (119 aa)). 4 cysteine pairs are disulfide-bonded: C149/C154, C167/C255, C171/C257, and C236/C249.

As to quaternary structure, homodimer; disulfide-linked. Interacts with the adapter protein TYROBP/DAP12; the interaction leads to natural killer cell activation.

It localises to the cell membrane. Functionally, receptor on natural killer (NK) cells for class I MHC. The sequence is that of Killer cell lectin-like receptor 8 (Klra8) from Mus musculus (Mouse).